The sequence spans 392 residues: Cell division protein FtsZ (392 aa).

Residues 24–28 (GGGCN), 111–113 (GTG), Glu-142, Arg-145, and Asp-189 contribute to the GTP site.

This sequence belongs to the FtsZ family. In terms of assembly, homodimer. Polymerizes to form a dynamic ring structure in a strictly GTP-dependent manner. Interacts directly with several other division proteins.

It localises to the cytoplasm. Functionally, essential cell division protein that forms a contractile ring structure (Z ring) at the future cell division site. The regulation of the ring assembly controls the timing and the location of cell division. One of the functions of the FtsZ ring is to recruit other cell division proteins to the septum to produce a new cell wall between the dividing cells. Binds GTP and shows GTPase activity. This chain is Cell division protein FtsZ, found in Neisseria meningitidis serogroup A / serotype 4A (strain DSM 15465 / Z2491).